Consider the following 379-residue polypeptide: Cytochrome b (379 aa).

The next 4 helical transmembrane spans lie at 33-53 (LGSLLGTCLIMQILTGLFLAM), 77-98 (WTIRHLHANGASMFFMCLYLHI), 113-133 (WNTGVMLLLTVMATAFMGYVL), and 178-198 (FFTLHFIAPFIILALVLTHLL). Heme b contacts are provided by His-83 and His-97. Positions 182 and 196 each coordinate heme b. His-201 contacts a ubiquinone. 4 helical membrane-spanning segments follow: residues 226–246 (IKDILGLLIMILTTLALTLLH), 288–308 (LGGVLTLICSILVLVIIPMTH), 320–340 (ISQCLFWILTADLLILTWIGG), and 347–367 (FTTIGLLASILYFTTILILTP).

The protein belongs to the cytochrome b family. The cytochrome bc1 complex contains 11 subunits: 3 respiratory subunits (MT-CYB, CYC1 and UQCRFS1), 2 core proteins (UQCRC1 and UQCRC2) and 6 low-molecular weight proteins (UQCRH/QCR6, UQCRB/QCR7, UQCRQ/QCR8, UQCR10/QCR9, UQCR11/QCR10 and a cleavage product of UQCRFS1). This cytochrome bc1 complex then forms a dimer. Heme b is required as a cofactor.

It is found in the mitochondrion inner membrane. In terms of biological role, component of the ubiquinol-cytochrome c reductase complex (complex III or cytochrome b-c1 complex) that is part of the mitochondrial respiratory chain. The b-c1 complex mediates electron transfer from ubiquinol to cytochrome c. Contributes to the generation of a proton gradient across the mitochondrial membrane that is then used for ATP synthesis. In Bradypus tridactylus (Pale-throated three-toed sloth), this protein is Cytochrome b (MT-CYB).